The chain runs to 951 residues: MASKRKSTTPCMIPVKTMVLPGASTEAQPVEPLPEGPQQDLPSEAPEASSEAAPNPSSTDGSALANGHRGTLDGYVYSCKECDFRSQDVTHFVGHMTSEHTDFNKDPHFVCTGCSFLAKTPEGLSLHNAKCHSGEASFLWNVTKPDNHVVVEQSVPENASSSVLAGESTEGTEIIITKTPIMKIMKGKAEAKKIHMLKENAPTQPGGEALPKPLAGETEGKEGDHTFINGATPVSQASANSTKPPHTANGPLIGTVPVLPAGIAQFLSLQQPTVHPQHHPHQPLPTSKALPKVMIPLSSIPTYNAAMDSNSFLKNSFHKFPYPTKAELCYLTVVTKYPEEQLKIWFTAQRLKQGISWSPEEIEDARKKMFNTVIQSVPQPTITVLNTPLVASAGNVQHLIQAALPGHAVGQPEGTAGGLLVTQPLMANGLQASSSSLPLTTASVPKPTAAPINTVCSNTTSAVKVVNAAQSLLTACPSITSQAFLDANIYKNKKSHEQLSALKGSFCRNQFPGQSEVEHLTKVTGLSTREVRKWFSDRRYHCRNLKGTRAMVPGEHGSVLIDSVPEVPFPLSSKVPEVPCVPTATSLVSHPATKRQSWHQTPDFTPTKYKERAPEQLRVLESSFAQNPLPPEEELDRLRSETKMTRREIDGWFSERRKRVNAEETKKADGHAPQEEAEGAEEEGRDEELASELRAPGENGSSEMFLSHTLAERKVSPIKINLKNLRVTEASGKSELPGMGMGVCEPEEDGLNKAVEQPPSRVSYKKTAQQRHLLRQLFVQTQWPSNQDYDSIMAQTGLPRPEVVRWFGDSRYALKNGQLKWYEDYKRGNFPPGLLVIAPGNRELLQDYYMTHKMLCEEDLQTLCEKTQMSAQQVKQWFAEKMGEETRAVADTSSEDQGPGHGEPVAVDKVLGDACAALSENSEAWEPSAPEAGSEPFDTSSPQSGRQLETD.

The disordered stretch occupies residues 1–66 (MASKRKSTTP…SSTDGSALAN (66 aa)). Residues 42–58 (PSEAPEASSEAAPNPSS) show a composition bias toward low complexity. 2 C2H2-type zinc fingers span residues 77–100 (YSCKECDFRSQDVTHFVGHMTSEH) and 109–132 (FVCTGCSFLAKTPEGLSLHNAKCH). A disordered region spans residues 198–249 (KENAPTQPGGEALPKPLAGETEGKEGDHTFINGATPVSQASANSTKPPHTAN). Over residues 232–244 (TPVSQASANSTKP) the composition is skewed to polar residues. The interval 237–481 (ASANSTKPPH…LLTACPSITS (245 aa)) is required for homodimerization and interaction with NFYA. The segment at 297–495 (LSSIPTYNAA…DANIYKNKKS (199 aa)) is required for repressor activity. 2 consecutive DNA-binding regions (homeobox) follow at residues 298 to 357 (SSIP…GISW) and 487 to 546 (ANIY…RNLK). Positions 490-548 (YKNKKSHEQLSALKGSFCRNQFPGQSEVEHLTKVTGLSTREVRKWFSDRRYHCRNLKGT) are required for nuclear localization. A Phosphoserine modification is found at Ser597. The segment at residues 605-664 (TPTKYKERAPEQLRVLESSFAQNPLPPEEELDRLRSETKMTRREIDGWFSERRKRVNAEE) is a DNA-binding region (homeobox 3). 2 disordered regions span residues 621-642 (ESSFAQNPLPPEEELDRLRSET) and 661-702 (NAEE…NGSS). The span at 661 to 674 (NAEETKKADGHAPQ) shows a compositional bias: basic and acidic residues. Over residues 675–690 (EEAEGAEEEGRDEELA) the composition is skewed to acidic residues. Phosphoserine occurs at positions 701 and 716. DNA-binding regions (homeobox) lie at residues 759–818 (PSRV…KNGQ) and 830–889 (FPPG…TRAV). Positions 885 to 951 (ETRAVADTSS…PQSGRQLETD (67 aa)) are disordered. Phosphoserine is present on residues Ser922 and Ser941. A compositionally biased stretch (polar residues) spans 937 to 951 (FDTSSPQSGRQLETD).

This sequence belongs to the ZHX family. Homodimer (via homeobox domain 1). Heterodimer with ZHX1 (via homeobox domain 1). Heterodimer with ZHX2 (via homeobox domain 1). Heterodimerization with ZHX1 is a prerequisite for repressor activity. Interacts with NFYA. As to expression, widely expressed.

It localises to the cytoplasm. The protein localises to the nucleus. Functionally, acts as a transcriptional repressor. Involved in the early stages of mesenchymal stem cell (MSC) osteogenic differentiation. Is a regulator of podocyte gene expression during primary glomerula disease. Binds to promoter DNA. This is Zinc fingers and homeoboxes protein 3 (Zhx3) from Rattus norvegicus (Rat).